A 203-amino-acid chain; its full sequence is ADP-ribosylation factor-like protein 6-interacting protein 1 (203 aa).

The Cytoplasmic portion of the chain corresponds to 1–41; it reads MAEGDNRSSNLLAVETASLEEQLQGWGEVMLMADKVLRWER. A helical transmembrane segment spans residues 42–62; sequence AWFPPAIMGVVSLLFLIIYYL. Topologically, residues 63 to 65 are lumenal; sequence DPS. The helical transmembrane segment at 66–86 threads the bilayer; the sequence is VLSGVSCFVMFLCLADYLVPI. At 87–133 the chain is on the cytoplasmic side; sequence LAPRIFGSNKWTTEQQQRFHEICSNLVKTRRRAVGWWKRLFSLKEEK. Residues 134 to 175 traverse the membrane as a helical segment; it reads PKMYFMTMIISLAAVAWVGQQVHNLLLTYLIVTFVLLLPGLN. At 176–203 the chain is on the lumenal side; it reads QHGIILKYIGMAKREINKLLKQKEKKNE.

The protein belongs to the ARL6ip family. Homooligomer. Heterodimer with ARL6IP5. Interacts with ARL6. Interacts with TMEM33. Interacts with ATL1. As to expression, expressed in the cerebral cortex, cerebellum, hippocampus, olfactory bulbs, medulla oblongate and limbic system (at protein level). Ubiquitous. Expressed in all hematopoietic cell lineages, with highest levels in early myeloid progenitor cells.

It localises to the endomembrane system. The protein resides in the endoplasmic reticulum membrane. The protein localises to the endoplasmic reticulum. Positively regulates SLC1A1/EAAC1-mediated glutamate transport by increasing its affinity for glutamate in a PKC activity-dependent manner. Promotes the catalytic efficiency of SLC1A1/EAAC1 probably by reducing its interaction with ARL6IP5, a negative regulator of SLC1A1/EAAC1-mediated glutamate transport. Plays a role in the formation and stabilization of endoplasmic reticulum tubules. Negatively regulates apoptosis, possibly by modulating the activity of caspase-9 (CASP9). Inhibits cleavage of CASP9-dependent substrates and downstream markers of apoptosis but not CASP9 itself. May be involved in protein transport, membrane trafficking, or cell signaling during hematopoietic maturation. This is ADP-ribosylation factor-like protein 6-interacting protein 1 (Arl6ip1) from Mus musculus (Mouse).